A 213-amino-acid polypeptide reads, in one-letter code: Protein SRN2 (213 aa).

In terms of domain architecture, VPS37 C-terminal spans 128–213; sequence SKYVASWQDY…TWDKQGNLKY (86 aa).

This sequence belongs to the VPS37 family. Component of the ESCRT-I complex (endosomal sorting complex required for transport I) which consists of STP22, VPS28, SRN2 and MVB12 in a 1:1:1:1 stoichiometry. Interacts with STP22 and MVB12.

It localises to the cytoplasm. It is found in the endosome. Its subcellular location is the late endosome membrane. In terms of biological role, component of the ESCRT-I complex, a regulator of vesicular trafficking process. Required for normal endocytic and biosynthetic traffic to the yeast vacuole. The chain is Protein SRN2 (SRN2) from Saccharomyces cerevisiae (strain ATCC 204508 / S288c) (Baker's yeast).